The following is a 61-amino-acid chain: Bacteriocin sakacin-P (61 aa).

A propeptide spanning residues 1–18 (MEKFIELSLKEVTAITGG) is cleaved from the precursor. Cys-27 and Cys-32 are disulfide-bonded.

The protein belongs to the bacteriocin class IIA/YGNGV family.

Its subcellular location is the secreted. Functionally, bactericidal activity; inhibits closely related Lactobacilli, Listeria monocytogenes and ivanovvi, Enterococcus faecalis, Carnobacterium sp and Brocothrix thermosphacta. This chain is Bacteriocin sakacin-P (sakP), found in Latilactobacillus sakei (Lactobacillus sakei).